Here is a 271-residue protein sequence, read N- to C-terminus: ATP-dependent Clp protease proteolytic subunit 6, chloroplastic (271 aa).

Residues 1 to 30 form a disordered region; that stretch reads MAGLAISPPLGLSFSSRTRNPKPTSFLSHN. The N-terminal 77 residues, 1 to 77, are a transit peptide targeting the chloroplast; the sequence is MAGLAISPPL…KAPRFGVIEA (77 aa). A compositionally biased stretch (polar residues) spans 13–30; the sequence is SFSSRTRNPKPTSFLSHN. Residue Ser175 is the Nucleophile of the active site. Residue His200 is part of the active site.

This sequence belongs to the peptidase S14 family. As to quaternary structure, component of the chloroplastic Clp protease core complex which consist of at least 16 proteins: CLPP4 (3 copies), CLPP5 (3 copies), CLPR4 (2 copies), ClpP1 (1 copy), CLPP6 (1 copy), CLPR2 (1 copy), CLPT1 (1 copy), CLPT2 (1 copy) and 3 copies of CLPP3 and/or CLPR1 and/or CLPR3. The core complex is organized in two heptameric rings, one containing CLPP3,4,5,6 in a 1:2:3:1 ratio and the other CLPP1 and CLPR1,2,3,4 in a 3:1:1:1:1 ratio. Mostly expressed in leaves. Also detected in stems, and to a lower extent, in roots (at protein level).

It is found in the plastid. It localises to the chloroplast stroma. It catalyses the reaction Hydrolysis of proteins to small peptides in the presence of ATP and magnesium. alpha-casein is the usual test substrate. In the absence of ATP, only oligopeptides shorter than five residues are hydrolyzed (such as succinyl-Leu-Tyr-|-NHMec, and Leu-Tyr-Leu-|-Tyr-Trp, in which cleavage of the -Tyr-|-Leu- and -Tyr-|-Trp bonds also occurs).. In terms of biological role, cleaves peptides in various proteins in a process that requires ATP hydrolysis. Has a chymotrypsin-like activity. Plays a major role in the degradation of misfolded proteins. Essential protein required for chloroplast development and integrity. This Arabidopsis thaliana (Mouse-ear cress) protein is ATP-dependent Clp protease proteolytic subunit 6, chloroplastic.